Here is a 162-residue protein sequence, read N- to C-terminus: MSIILIGFMGAGKSTVAKLLAEEFTDLDKLIEEEIEMPIATFFELFGEADFRKIENEVFELAVQKDIIIATGGGIIENPKNLNVLDRASRVVFLTADFDTLWKRISMDWQNVRPLAQDKEAAQLLFEKRMKDYSLVADLTIDVTDKSPEQIAEQIREKWEIE.

10-15 (GAGKST) is an ATP binding site. Residue serine 14 coordinates Mg(2+). Substrate is bound by residues aspartate 28, arginine 52, and glycine 73. Position 113 (arginine 113) interacts with ATP. Arginine 129 provides a ligand contact to substrate.

This sequence belongs to the shikimate kinase family. As to quaternary structure, monomer. Mg(2+) is required as a cofactor.

The protein resides in the cytoplasm. The catalysed reaction is shikimate + ATP = 3-phosphoshikimate + ADP + H(+). Its pathway is metabolic intermediate biosynthesis; chorismate biosynthesis; chorismate from D-erythrose 4-phosphate and phosphoenolpyruvate: step 5/7. Its function is as follows. Catalyzes the specific phosphorylation of the 3-hydroxyl group of shikimic acid using ATP as a cosubstrate. The polypeptide is Shikimate kinase (Lactococcus lactis subsp. cremoris (strain MG1363)).